We begin with the raw amino-acid sequence, 676 residues long: DNA ligase (676 aa).

NAD(+) contacts are provided by residues 34 to 38 (DAEYD), 84 to 85 (SL), and Glu-116. Residue Lys-118 is the N6-AMP-lysine intermediate of the active site. NAD(+) is bound by residues Arg-139, Glu-174, Lys-294, and Lys-318. 4 residues coordinate Zn(2+): Cys-412, Cys-415, Cys-428, and Cys-433. The BRCT domain occupies 589 to 676 (KGGEALKGLT…RTGKKAEELV (88 aa)).

The protein belongs to the NAD-dependent DNA ligase family. LigA subfamily. It depends on Mg(2+) as a cofactor. Mn(2+) is required as a cofactor.

The catalysed reaction is NAD(+) + (deoxyribonucleotide)n-3'-hydroxyl + 5'-phospho-(deoxyribonucleotide)m = (deoxyribonucleotide)n+m + AMP + beta-nicotinamide D-nucleotide.. Its function is as follows. DNA ligase that catalyzes the formation of phosphodiester linkages between 5'-phosphoryl and 3'-hydroxyl groups in double-stranded DNA using NAD as a coenzyme and as the energy source for the reaction. It is essential for DNA replication and repair of damaged DNA. The protein is DNA ligase of Thermus thermophilus (strain ATCC 27634 / DSM 579 / HB8).